Here is a 284-residue protein sequence, read N- to C-terminus: Four and a half LIM domains protein 5 (284 aa).

The C4-type zinc-finger motif lies at 8-32 (CQYCTASLLGKKYVLKDDSLFCVTC). LIM zinc-binding domains follow at residues 39–100 (NYCE…ECSS), 101–160 (KCFH…KEFA), 161–220 (HYCN…LYAN), and 223–283 (VACS…MDSD).

Interacts with CREM (via the third LIM domain). Interacts (via second LIM domain) with SPAG8.

It is found in the nucleus. In terms of biological role, may be involved in the regulation of spermatogenesis. Stimulates CREM transcriptional activity in a phosphorylation-independent manner. The sequence is that of Four and a half LIM domains protein 5 (FHL5) from Macaca fascicularis (Crab-eating macaque).